The following is a 205-amino-acid chain: Inactive ribonuclease-like protein 9 (205 aa).

The N-terminal stretch at 1–26 (MMRTLITTHPLPLLLLPQQLLQPVQF) is a signal peptide. Disulfide bonds link Cys98/Cys153, Cys116/Cys168, and Cys123/Cys130. Residues Asn131 and Asn143 are each glycosylated (N-linked (GlcNAc...) asparagine).

The protein belongs to the pancreatic ribonuclease family.

The protein resides in the secreted. Functionally, does not exhibit any ribonuclease activity. This is Inactive ribonuclease-like protein 9 (RNASE9) from Pan troglodytes (Chimpanzee).